Here is a 66-residue protein sequence, read N- to C-terminus: Large ribosomal subunit protein uL29c (66 aa).

It belongs to the universal ribosomal protein uL29 family.

The protein localises to the plastid. It localises to the chloroplast. The chain is Large ribosomal subunit protein uL29c from Gracilaria tenuistipitata var. liui (Red alga).